We begin with the raw amino-acid sequence, 241 residues long: Methylthioribulose-1-phosphate dehydratase (241 aa).

Cysteine 100 provides a ligand contact to substrate. Zn(2+) is bound by residues histidine 117 and histidine 119. Catalysis depends on glutamate 146, which acts as the Proton donor/acceptor. Histidine 202 contacts Zn(2+).

This sequence belongs to the aldolase class II family. MtnB subfamily. It depends on Zn(2+) as a cofactor.

It localises to the cytoplasm. It carries out the reaction 5-(methylsulfanyl)-D-ribulose 1-phosphate = 5-methylsulfanyl-2,3-dioxopentyl phosphate + H2O. Its pathway is amino-acid biosynthesis; L-methionine biosynthesis via salvage pathway; L-methionine from S-methyl-5-thio-alpha-D-ribose 1-phosphate: step 2/6. Functionally, catalyzes the dehydration of methylthioribulose-1-phosphate (MTRu-1-P) into 2,3-diketo-5-methylthiopentyl-1-phosphate (DK-MTP-1-P). This chain is Methylthioribulose-1-phosphate dehydratase, found in Ajellomyces dermatitidis (strain ER-3 / ATCC MYA-2586) (Blastomyces dermatitidis).